Here is a 438-residue protein sequence, read N- to C-terminus: L-cysteine:1D-myo-inositol 2-amino-2-deoxy-alpha-D-glucopyranoside ligase (438 aa).

Residues 1–27 form a disordered region; the sequence is MKSWSSRPVPELPGTGTAPRVHDTSTG. Cysteine 44 provides a ligand contact to Zn(2+). L-cysteinyl-5'-AMP-binding positions include 44–47, threonine 59, and 82–84; these read CGIT and NVT. Residues 46–56 carry the 'HIGH' region motif; the sequence is ITPYDATHMGH. Residues 208 to 213 carry the 'ERGGDP' region motif; the sequence is DHGGDP. Tryptophan 249 lines the L-cysteinyl-5'-AMP pocket. Cysteine 253 contacts Zn(2+). 271–273 is an L-cysteinyl-5'-AMP binding site; that stretch reads GSD. Residue histidine 278 coordinates Zn(2+). Valine 304 lines the L-cysteinyl-5'-AMP pocket. The 'KMSKS' region signature appears at 310–314; that stretch reads KMSKS.

Belongs to the class-I aminoacyl-tRNA synthetase family. MshC subfamily. As to quaternary structure, monomer. It depends on Zn(2+) as a cofactor.

It carries out the reaction 1D-myo-inositol 2-amino-2-deoxy-alpha-D-glucopyranoside + L-cysteine + ATP = 1D-myo-inositol 2-(L-cysteinylamino)-2-deoxy-alpha-D-glucopyranoside + AMP + diphosphate + H(+). Catalyzes the ATP-dependent condensation of GlcN-Ins and L-cysteine to form L-Cys-GlcN-Ins. The sequence is that of L-cysteine:1D-myo-inositol 2-amino-2-deoxy-alpha-D-glucopyranoside ligase from Kocuria rhizophila (strain ATCC 9341 / DSM 348 / NBRC 103217 / DC2201).